Here is a 314-residue protein sequence, read N- to C-terminus: DNA-directed RNA polymerase subunit alpha (314 aa).

The interval 1 to 227 (MIEFQKPTIS…EHLALFIDLS (227 aa)) is alpha N-terminal domain (alpha-NTD). An alpha C-terminal domain (alpha-CTD) region spans residues 241 to 314 (VETVMENKEP…GQSFKQETEN (74 aa)).

The protein belongs to the RNA polymerase alpha chain family. Homodimer. The RNAP catalytic core consists of 2 alpha, 1 beta, 1 beta' and 1 omega subunit. When a sigma factor is associated with the core the holoenzyme is formed, which can initiate transcription.

The catalysed reaction is RNA(n) + a ribonucleoside 5'-triphosphate = RNA(n+1) + diphosphate. Functionally, DNA-dependent RNA polymerase catalyzes the transcription of DNA into RNA using the four ribonucleoside triphosphates as substrates. In Oenococcus oeni (strain ATCC BAA-331 / PSU-1), this protein is DNA-directed RNA polymerase subunit alpha.